Reading from the N-terminus, the 82-residue chain is Small ribosomal subunit protein bS16 (82 aa).

This sequence belongs to the bacterial ribosomal protein bS16 family.

The sequence is that of Small ribosomal subunit protein bS16 from Yersinia pseudotuberculosis serotype O:1b (strain IP 31758).